The following is a 395-amino-acid chain: Bifunctional enzyme IspD/IspF (395 aa).

The interval methionine 1–proline 237 is 2-C-methyl-D-erythritol 4-phosphate cytidylyltransferase. The 2-C-methyl-D-erythritol 2,4-cyclodiphosphate synthase stretch occupies residues cysteine 238–proline 395. 2 residues coordinate a divalent metal cation: aspartate 244 and histidine 246. Residues aspartate 244–histidine 246 and histidine 270–serine 271 contribute to the 4-CDP-2-C-methyl-D-erythritol 2-phosphate site. Position 278 (histidine 278) interacts with a divalent metal cation. 4-CDP-2-C-methyl-D-erythritol 2-phosphate-binding positions include aspartate 292 to glycine 294, phenylalanine 297 to aspartate 301, threonine 368 to glutamate 371, and phenylalanine 375.

The protein in the N-terminal section; belongs to the IspD/TarI cytidylyltransferase family. IspD subfamily. In the C-terminal section; belongs to the IspF family. It depends on a divalent metal cation as a cofactor.

The catalysed reaction is 2-C-methyl-D-erythritol 4-phosphate + CTP + H(+) = 4-CDP-2-C-methyl-D-erythritol + diphosphate. It catalyses the reaction 4-CDP-2-C-methyl-D-erythritol 2-phosphate = 2-C-methyl-D-erythritol 2,4-cyclic diphosphate + CMP. The protein operates within isoprenoid biosynthesis; isopentenyl diphosphate biosynthesis via DXP pathway; isopentenyl diphosphate from 1-deoxy-D-xylulose 5-phosphate: step 2/6. Its pathway is isoprenoid biosynthesis; isopentenyl diphosphate biosynthesis via DXP pathway; isopentenyl diphosphate from 1-deoxy-D-xylulose 5-phosphate: step 4/6. In terms of biological role, bifunctional enzyme that catalyzes the formation of 4-diphosphocytidyl-2-C-methyl-D-erythritol from CTP and 2-C-methyl-D-erythritol 4-phosphate (MEP) (IspD), and catalyzes the conversion of 4-diphosphocytidyl-2-C-methyl-D-erythritol 2-phosphate (CDP-ME2P) to 2-C-methyl-D-erythritol 2,4-cyclodiphosphate (ME-CPP) with a corresponding release of cytidine 5-monophosphate (CMP) (IspF). The protein is Bifunctional enzyme IspD/IspF of Nitratidesulfovibrio vulgaris (strain ATCC 29579 / DSM 644 / CCUG 34227 / NCIMB 8303 / VKM B-1760 / Hildenborough) (Desulfovibrio vulgaris).